The following is a 64-amino-acid chain: Large ribosomal subunit protein bL35 (64 aa).

The segment covering 1-28 (MPKMKTKSGAAKRFKKTAGGLKHKHAFK) has biased composition (basic residues). The tract at residues 1-64 (MPKMKTKSGA…ARVERSLRLR (64 aa)) is disordered. A compositionally biased stretch (basic and acidic residues) spans 53–64 (DVARVERSLRLR).

Belongs to the bacterial ribosomal protein bL35 family.

The protein is Large ribosomal subunit protein bL35 of Pseudomonas aeruginosa (strain LESB58).